The chain runs to 636 residues: Chaperone protein DnaK (636 aa).

Residue Thr-198 is modified to Phosphothreonine; by autocatalysis. Residues 602-636 (QAEGAQPGGEAAGEASAKDEKVVDADFEEVKDDKK) form a disordered region. Residues 626–636 (ADFEEVKDDKK) are compositionally biased toward acidic residues.

The protein belongs to the heat shock protein 70 family.

In terms of biological role, acts as a chaperone. The chain is Chaperone protein DnaK from Geobacter sulfurreducens (strain ATCC 51573 / DSM 12127 / PCA).